A 635-amino-acid chain; its full sequence is Early transcription factor 70 kDa subunit (635 aa).

The region spanning 32 to 185 is the Helicase ATP-binding domain; the sequence is RSILDENNSV…SNIISIMSDE (154 aa). Residue 45 to 52 participates in ATP binding; that stretch reads HIMGSGKT. The DEXH box motif lies at 135 to 138; sequence DEAH.

Belongs to the helicase family. VETF subfamily. As to quaternary structure, heterodimer of a 70 kDa and a 82 kDa subunit. Part of the early transcription complex composed of ETF, RAP94, and the DNA-directed RNA polymerase.

It is found in the virion. Its function is as follows. Acts with RNA polymerase to initiate transcription from early gene promoters. Is recruited by the RPO-associated protein of 94 kDa (RAP94) to form the early transcription complex, which also contains the core RNA polymerase. ETF heterodimer binds to early gene promoters. In Homo sapiens (Human), this protein is Early transcription factor 70 kDa subunit (VETFS).